Here is a 444-residue protein sequence, read N- to C-terminus: Protein phosphatase 2C homolog C10F6.17c (444 aa).

Residues 85–439 form the PPM-type phosphatase domain; that stretch reads RYDFNQVASN…DDITVTVIFF (355 aa). Mn(2+) contacts are provided by Asp121, Gly122, and Asp344.

This sequence belongs to the PP2C family. Mg(2+) serves as cofactor. Requires Mn(2+) as cofactor.

Its subcellular location is the mitochondrion. It carries out the reaction O-phospho-L-seryl-[protein] + H2O = L-seryl-[protein] + phosphate. The catalysed reaction is O-phospho-L-threonyl-[protein] + H2O = L-threonyl-[protein] + phosphate. Its function is as follows. Involved in regulation of pyruvate dehydrogenase activity. The polypeptide is Protein phosphatase 2C homolog C10F6.17c (Schizosaccharomyces pombe (strain 972 / ATCC 24843) (Fission yeast)).